Reading from the N-terminus, the 336-residue chain is Aspartate carbamoyltransferase catalytic subunit (336 aa).

Carbamoyl phosphate-binding residues include R72 and T73. K100 is an L-aspartate binding site. The carbamoyl phosphate site is built by R122, H152, and Q155. Residues R185 and R240 each contribute to the L-aspartate site. Residues G281 and P282 each coordinate carbamoyl phosphate.

This sequence belongs to the aspartate/ornithine carbamoyltransferase superfamily. ATCase family. Heterododecamer (2C3:3R2) of six catalytic PyrB chains organized as two trimers (C3), and six regulatory PyrI chains organized as three dimers (R2).

The catalysed reaction is carbamoyl phosphate + L-aspartate = N-carbamoyl-L-aspartate + phosphate + H(+). It functions in the pathway pyrimidine metabolism; UMP biosynthesis via de novo pathway; (S)-dihydroorotate from bicarbonate: step 2/3. In terms of biological role, catalyzes the condensation of carbamoyl phosphate and aspartate to form carbamoyl aspartate and inorganic phosphate, the committed step in the de novo pyrimidine nucleotide biosynthesis pathway. This is Aspartate carbamoyltransferase catalytic subunit from Marinobacter nauticus (strain ATCC 700491 / DSM 11845 / VT8) (Marinobacter aquaeolei).